We begin with the raw amino-acid sequence, 279 residues long: Hydroxyethylthiazole kinase (279 aa).

Met58 serves as a coordination point for substrate. 2 residues coordinate ATP: Lys134 and Thr180. A substrate-binding site is contributed by Gly207.

This sequence belongs to the Thz kinase family. The cofactor is Mg(2+).

The enzyme catalyses 5-(2-hydroxyethyl)-4-methylthiazole + ATP = 4-methyl-5-(2-phosphooxyethyl)-thiazole + ADP + H(+). It participates in cofactor biosynthesis; thiamine diphosphate biosynthesis; 4-methyl-5-(2-phosphoethyl)-thiazole from 5-(2-hydroxyethyl)-4-methylthiazole: step 1/1. In terms of biological role, catalyzes the phosphorylation of the hydroxyl group of 4-methyl-5-beta-hydroxyethylthiazole (THZ). This chain is Hydroxyethylthiazole kinase, found in Methanoculleus marisnigri (strain ATCC 35101 / DSM 1498 / JR1).